A 313-amino-acid chain; its full sequence is Protein PALE CRESS, chloroplastic (313 aa).

The N-terminal 22 residues, 1-22 (MAATSLVLTCASPLFSSPRVIS), are a transit peptide targeting the chloroplast.

As to expression, expressed in green tissues, including leaves. Accumulates in chloroplasts of mature stomatal guard cells.

The protein localises to the plastid. It is found in the chloroplast. Its subcellular location is the chromoplast. The protein resides in the etioplast. It localises to the amyloplast. Its function is as follows. Required for the differentiation of chloroplast from proplastids or etioplasts, probably by modulating some chloroplast-encoded genes expression and mRNA maturation. Involved in leaf-cells differentiation. This is Protein PALE CRESS, chloroplastic (PAC) from Arabidopsis thaliana (Mouse-ear cress).